Here is a 364-residue protein sequence, read N- to C-terminus: Coproporphyrin III ferrochelatase (364 aa).

Arg-29 and Tyr-118 together coordinate Fe-coproporphyrin III. Fe(2+) is bound by residues His-169 and Glu-250.

The protein belongs to the ferrochelatase family.

The protein localises to the cytoplasm. The catalysed reaction is Fe-coproporphyrin III + 2 H(+) = coproporphyrin III + Fe(2+). It functions in the pathway porphyrin-containing compound metabolism; protoheme biosynthesis. Functionally, involved in coproporphyrin-dependent heme b biosynthesis. Catalyzes the insertion of ferrous iron into coproporphyrin III to form Fe-coproporphyrin III. The chain is Coproporphyrin III ferrochelatase from Streptococcus pneumoniae (strain Hungary19A-6).